Here is a 192-residue protein sequence, read N- to C-terminus: Protein GrpE (192 aa).

The disordered stretch occupies residues 1–34; it reads MSSKEQKTPNEQVSEEMENTAEQQVEATQETGEC. Polar residues predominate over residues 20-31; sequence TAEQQVEATQET.

The protein belongs to the GrpE family. As to quaternary structure, homodimer.

The protein resides in the cytoplasm. Its function is as follows. Participates actively in the response to hyperosmotic and heat shock by preventing the aggregation of stress-denatured proteins, in association with DnaK and GrpE. It is the nucleotide exchange factor for DnaK and may function as a thermosensor. Unfolded proteins bind initially to DnaJ; upon interaction with the DnaJ-bound protein, DnaK hydrolyzes its bound ATP, resulting in the formation of a stable complex. GrpE releases ADP from DnaK; ATP binding to DnaK triggers the release of the substrate protein, thus completing the reaction cycle. Several rounds of ATP-dependent interactions between DnaJ, DnaK and GrpE are required for fully efficient folding. The polypeptide is Protein GrpE (Yersinia pseudotuberculosis serotype I (strain IP32953)).